We begin with the raw amino-acid sequence, 440 residues long: MRSLKLLLCWISFLTLSISISASSDDQFTLDGTVLELTDSNFDSAISTFDCIFVDFYAPWCGHCKRLNPELDAAAPILAKLKQPIVIAKLNADKYSRLARKIEIDAFPTLMLYNHGVPMEYYGPRKADLLVRYLKKFVAPDVAVLESDSTVKEFVEDAGTFFPVFIGFGLNESIISGLGRKYKKKAWFAVSKEVSEDTMVSYDFDKAPALVANHPTYNEHSVFYGPFEDGFLEEFVKQSFLPLILPINHDTLKLLKDDERKIVLTIVEDETHESLEKLYKALRAAAHANRDLVFGYVGVKQFEEFVDSFHVDKKTNLPKIVVWDGDEEYDQVTGIETITQEEDHLTQVSRFLEGYREGRTEKKKINGPSFMGFINSMIGIRSVYILVFLVAVIMMLRSLGQVEEPTGVRTATAVRERVDQATTVPEDESSEHKPSDKKED.

Positions 1 to 23 (MRSLKLLLCWISFLTLSISISAS) are cleaved as a signal peptide. The Thioredoxin domain maps to 24-139 (SDDQFTLDGT…LVRYLKKFVA (116 aa)). Active-site nucleophile residues include cysteine 61 and cysteine 64. Cysteines 61 and 64 form a disulfide. Threonine 160 carries the post-translational modification Phosphothreonine. An N-linked (GlcNAc...) asparagine glycan is attached at asparagine 171. A helical membrane pass occupies residues 376–396 (SMIGIRSVYILVFLVAVIMML). A disordered region spans residues 406–440 (TGVRTATAVRERVDQATTVPEDESSEHKPSDKKED). A compositionally biased stretch (basic and acidic residues) spans 430-440 (SEHKPSDKKED).

The protein belongs to the protein disulfide isomerase family. In terms of tissue distribution, widely expressed.

The protein resides in the membrane. Acts as a protein-folding catalyst that interacts with nascent polypeptides to catalyze the formation, isomerization, and reduction or oxidation of disulfide bonds. This chain is Protein disulfide-isomerase 5-2 (PDIL5-2), found in Arabidopsis thaliana (Mouse-ear cress).